Consider the following 305-residue polypeptide: Ribosomal protein L11 methyltransferase (305 aa).

S-adenosyl-L-methionine is bound by residues threonine 155, glycine 176, aspartate 198, and asparagine 241.

The protein belongs to the methyltransferase superfamily. PrmA family.

Its subcellular location is the cytoplasm. The enzyme catalyses L-lysyl-[protein] + 3 S-adenosyl-L-methionine = N(6),N(6),N(6)-trimethyl-L-lysyl-[protein] + 3 S-adenosyl-L-homocysteine + 3 H(+). Functionally, methylates ribosomal protein L11. The polypeptide is Ribosomal protein L11 methyltransferase (Carboxydothermus hydrogenoformans (strain ATCC BAA-161 / DSM 6008 / Z-2901)).